The sequence spans 62 residues: Large ribosomal subunit protein bL28 (62 aa).

The protein belongs to the bacterial ribosomal protein bL28 family.

The polypeptide is Large ribosomal subunit protein bL28 (Helicobacter hepaticus (strain ATCC 51449 / 3B1)).